A 399-amino-acid chain; its full sequence is Enoyl-[acyl-carrier-protein] reductase [NADH] (399 aa).

NAD(+) contacts are provided by residues G49–Y54, F75–E76, D112–A113, and L141–A142. Residue Y227 participates in substrate binding. The active-site Proton donor is the Y237. NAD(+) contacts are provided by residues K246 and V272–T274.

This sequence belongs to the TER reductase family. In terms of assembly, monomer.

It carries out the reaction a 2,3-saturated acyl-[ACP] + NAD(+) = a (2E)-enoyl-[ACP] + NADH + H(+). It participates in lipid metabolism; fatty acid biosynthesis. In terms of biological role, involved in the final reduction of the elongation cycle of fatty acid synthesis (FAS II). Catalyzes the reduction of a carbon-carbon double bond in an enoyl moiety that is covalently linked to an acyl carrier protein (ACP). The protein is Enoyl-[acyl-carrier-protein] reductase [NADH] of Pseudomonas putida (strain W619).